A 227-amino-acid chain; its full sequence is Orotidine 5'-phosphate decarboxylase (227 aa).

Residues aspartate 8, lysine 30, 59 to 68, threonine 118, arginine 178, glutamine 187, glycine 207, and arginine 208 each bind substrate; that span reads DLKLYDIPNT. The active-site Proton donor is the lysine 61.

The protein belongs to the OMP decarboxylase family. Type 1 subfamily. In terms of assembly, homodimer.

It catalyses the reaction orotidine 5'-phosphate + H(+) = UMP + CO2. It functions in the pathway pyrimidine metabolism; UMP biosynthesis via de novo pathway; UMP from orotate: step 2/2. Catalyzes the decarboxylation of orotidine 5'-monophosphate (OMP) to uridine 5'-monophosphate (UMP). This chain is Orotidine 5'-phosphate decarboxylase, found in Sulfurimonas denitrificans (strain ATCC 33889 / DSM 1251) (Thiomicrospira denitrificans (strain ATCC 33889 / DSM 1251)).